A 334-amino-acid chain; its full sequence is Nucleoid-associated protein plu2870 (334 aa).

It belongs to the YejK family.

The protein resides in the cytoplasm. It localises to the nucleoid. In Photorhabdus laumondii subsp. laumondii (strain DSM 15139 / CIP 105565 / TT01) (Photorhabdus luminescens subsp. laumondii), this protein is Nucleoid-associated protein plu2870.